The primary structure comprises 562 residues: MKRARLEDDFNPVYPYEHYNPLDIPFITPPFASSNGLQEKPPGVLSLKYTDPLTTKNGALTLKLGTGLNIDENGDLSSDASVEVSAPITKTNKIVGLNYTKPLALRSNALTLSYNAPLNVVNNNLALNISQPVTVNANNELSLLIDAPLNADTGTLRLQSAAPLGLVDKTLKVLFSSPLYLDNNFLTLAIERPLALSSSRAVTLKYSPPLKIENENLTLSTGGPFTVSGGNLNLTTSAPLSVQNNSLSLVITSPLKVINSMLAVGVNPPFTITDSGLAMDLGDGLALGGSKLIINLGPGLQMSNGAITLALDAALPLQYRDNQLQLRIGSTSGLIMSGVTQTLNVNANTGKGLAVENNSLVVKLGNGLRFDSWGSITVSPTTTTPTTLWTTADPSPNATFYESLDAKVWLVLVKCNGMVNGTISIKAQKGILLRPTASFISFVMYFYSDGTWRKNYPVFDNEGILANSATWGYRQGQSANTNVSNAVEFMPSSKRYPNQKGSEVQNMALTYTFLQGDPNMAISFQSIYNHALEGYSLKFTWRVRNNERFDIPCCSFSYVTEQ.

It belongs to the adenoviridae fiber family. Homotrimer. Interacts with host receptor CXCAR. Interacts (via N-terminal tail region) with pentons.

The protein resides in the virion. It is found in the host nucleus. Functionally, forms spikes that protrude from each vertex of the icosahedral capsid. Interacts with host receptor CXCAR to provide virion initial attachment to target cell. Fiber proteins are shed during virus entry, when virus is still at the cell surface. The protein is Fiber protein 1 of Homo sapiens (Human).